The sequence spans 146 residues: Hemoglobin subunit beta (146 aa).

An N-acetylvaline modification is found at Val-1. Residues 2 to 146 (HLTDAEKAAV…VATALAHKYH (145 aa)) form the Globin domain. Ser-44 is modified (phosphoserine). The residue at position 59 (Lys-59) is an N6-acetyllysine. Residue His-63 coordinates heme b. N6-acetyllysine is present on Lys-82. His-92 is a heme b binding site. Position 93 is an S-nitrosocysteine (Cys-93). Position 144 is an N6-acetyllysine (Lys-144).

It belongs to the globin family. As to quaternary structure, heterotetramer of two alpha chains and two beta chains. In terms of tissue distribution, red blood cells.

Involved in oxygen transport from the lung to the various peripheral tissues. The protein is Hemoglobin subunit beta (HBB) of Spalax ehrenbergi (Middle East blind mole rat).